A 148-amino-acid polypeptide reads, in one-letter code: uncharacterized protein (148 aa).

Residues 97–112 show a composition bias toward basic and acidic residues; it reads KKLDEQRMPGKPKNTE. The tract at residues 97–126 is disordered; sequence KKLDEQRMPGKPKNTEGSKSTIRKKANVGN.

This is an uncharacterized protein from Caenorhabditis elegans.